The primary structure comprises 359 residues: Molybdenum import ATP-binding protein ModC (359 aa).

The ABC transporter domain maps to M1 to E229. G31 to T38 contributes to the ATP binding site. The Mop domain occupies S289–N354.

The protein belongs to the ABC transporter superfamily. Molybdate importer (TC 3.A.1.8) family. As to quaternary structure, the complex is composed of two ATP-binding proteins (ModC), two transmembrane proteins (ModB) and a solute-binding protein (ModA).

It localises to the cell inner membrane. The enzyme catalyses molybdate(out) + ATP + H2O = molybdate(in) + ADP + phosphate + H(+). Functionally, part of the ABC transporter complex ModABC involved in molybdenum import. Responsible for energy coupling to the transport system. The polypeptide is Molybdenum import ATP-binding protein ModC (Yersinia pseudotuberculosis serotype I (strain IP32953)).